The chain runs to 337 residues: Phosphate acyltransferase (337 aa).

Belongs to the PlsX family. In terms of assembly, homodimer. Probably interacts with PlsY.

It localises to the cytoplasm. The enzyme catalyses a fatty acyl-[ACP] + phosphate = an acyl phosphate + holo-[ACP]. The protein operates within lipid metabolism; phospholipid metabolism. In terms of biological role, catalyzes the reversible formation of acyl-phosphate (acyl-PO(4)) from acyl-[acyl-carrier-protein] (acyl-ACP). This enzyme utilizes acyl-ACP as fatty acyl donor, but not acyl-CoA. The polypeptide is Phosphate acyltransferase (Listeria monocytogenes serotype 4b (strain F2365)).